The sequence spans 285 residues: Putative cytochrome c peroxidase, mitochondrial (285 aa).

H37 functions as the Proton acceptor in the catalytic mechanism. Position 161 (H161) interacts with heme b. Catalysis depends on W177, which acts as the Tryptophan radical intermediate.

It belongs to the peroxidase family. Cytochrome c peroxidase subfamily. Forms a one-to-one complex with cytochrome c. Requires heme b as cofactor.

The protein resides in the mitochondrion matrix. The protein localises to the mitochondrion intermembrane space. It catalyses the reaction 2 Fe(II)-[cytochrome c] + H2O2 + 2 H(+) = 2 Fe(III)-[cytochrome c] + 2 H2O. Functionally, destroys radicals which are normally produced within the cells and which are toxic to biological systems. The polypeptide is Putative cytochrome c peroxidase, mitochondrial (Yarrowia lipolytica (strain CLIB 122 / E 150) (Yeast)).